Reading from the N-terminus, the 208-residue chain is Thymidylate kinase (208 aa).

An ATP-binding site is contributed by 10 to 17; the sequence is GPDGSGKT.

The protein belongs to the thymidylate kinase family.

It carries out the reaction dTMP + ATP = dTDP + ADP. Its function is as follows. Phosphorylation of dTMP to form dTDP in both de novo and salvage pathways of dTTP synthesis. The protein is Thymidylate kinase of Listeria monocytogenes serotype 4a (strain HCC23).